We begin with the raw amino-acid sequence, 233 residues long: 2,3,4,5-tetrahydropyridine-2,6-dicarboxylate N-acetyltransferase (233 aa).

The protein belongs to the transferase hexapeptide repeat family. DapH subfamily.

The enzyme catalyses (S)-2,3,4,5-tetrahydrodipicolinate + acetyl-CoA + H2O = L-2-acetamido-6-oxoheptanedioate + CoA. It participates in amino-acid biosynthesis; L-lysine biosynthesis via DAP pathway; LL-2,6-diaminopimelate from (S)-tetrahydrodipicolinate (acetylase route): step 1/3. Catalyzes the transfer of an acetyl group from acetyl-CoA to tetrahydrodipicolinate. The sequence is that of 2,3,4,5-tetrahydropyridine-2,6-dicarboxylate N-acetyltransferase from Leuconostoc mesenteroides subsp. mesenteroides (strain ATCC 8293 / DSM 20343 / BCRC 11652 / CCM 1803 / JCM 6124 / NCDO 523 / NBRC 100496 / NCIMB 8023 / NCTC 12954 / NRRL B-1118 / 37Y).